Reading from the N-terminus, the 462-residue chain is Metal cation symporter ZIP8 (462 aa).

The N-terminal stretch at 1 to 19 (MAPGRAVAGLLLLAATSLG) is a signal peptide. The Extracellular segment spans residues 20–132 (HPSEGPELAF…PSLSEVWGYG (113 aa)). Asparagine 40, asparagine 88, and asparagine 96 each carry an N-linked (GlcNAc...) asparagine glycan. Residues 133–153 (FLSVTIINLASLLGLILTPLI) form a helical membrane-spanning segment. Residues 154 to 160 (KKSYFPK) are Cytoplasmic-facing. A helical membrane pass occupies residues 161–181 (ILTYFVGLAIGTLFSNAIFQL). Residues 182-191 (IPEAFGFNPK) are Extracellular-facing. A helical transmembrane segment spans residues 192–212 (IDNYVEKAVAVFGGFYMLFFV). Over 213-367 (ERTLKMLLKT…LNAGMSTRQA (155 aa)) the chain is Cytoplasmic. Residues 345-350 (EEFPHE) carry the XEXPHE-motif motif. A helical transmembrane segment spans residues 368 to 388 (LLFNFLSACSCYVGLAFGILV). Topologically, residues 389 to 390 (GN) are extracellular. The chain crosses the membrane as a helical span at residues 391–411 (NFAPNIIFALAGGMFLYISLA). The Cytoplasmic portion of the chain corresponds to 412-431 (DMFPEMNDMLREKVTGRQTD). A helical membrane pass occupies residues 432-452 (FTFFMIQNAGMLTGFTAILLI). Residues 453-462 (TLYAGDIELQ) lie on the Extracellular side of the membrane.

Belongs to the ZIP transporter (TC 2.A.5) family. Homodimer. Post-translationally, N-glycosylated. N-glycosylation is not required for proper iron and zinc transport. In terms of tissue distribution, ubiquitously expressed.

It localises to the cell membrane. The protein localises to the apical cell membrane. It is found in the basolateral cell membrane. The protein resides in the lysosome membrane. The enzyme catalyses Zn(2+)(out) + 2 hydrogencarbonate(out) = Zn(2+)(in) + 2 hydrogencarbonate(in). The catalysed reaction is selenite(out) + Zn(2+)(out) + hydrogencarbonate(out) = selenite(in) + Zn(2+)(in) + hydrogencarbonate(in). It catalyses the reaction Mn(2+)(out) + 2 hydrogencarbonate(out) = Mn(2+)(in) + 2 hydrogencarbonate(in). It carries out the reaction Cd(2+)(out) + 2 hydrogencarbonate(out) = Cd(2+)(in) + 2 hydrogencarbonate(in). The enzyme catalyses Fe(2+)(out) + 2 hydrogencarbonate(out) = Fe(2+)(in) + 2 hydrogencarbonate(in). The catalysed reaction is Co(2+)(out) + 2 hydrogencarbonate(out) = Co(2+)(in) + 2 hydrogencarbonate(in). In terms of biological role, electroneutral divalent metal cation:bicarbonate symporter of the plasma membrane mediating the cellular uptake of zinc and manganese, two divalent metal cations important for development, tissue homeostasis and immunity. Transports an electroneutral complex composed of a divalent metal cation and two bicarbonate anions or alternatively a bicarbonate and a selenite anion. Thereby, it also contributes to the cellular uptake of selenium, an essential trace metal and micronutrient. Also imports cadmium a non-essential metal which is cytotoxic and carcinogenic. May also transport iron and cobalt through membranes. Through zinc import, indirectly regulates the metal-dependent transcription factor MTF1 and the expression of some metalloproteases involved in cartilage catabolism and also probably heart development. Also indirectly regulates the expression of proteins involved in cell morphology and cytoskeleton organization. Indirectly controls innate immune function and inflammatory response by regulating zinc cellular uptake which in turn modulates the expression of genes specific of these processes. Protects, for instance, cells from injury and death at the onset of inflammation. By regulating zinc influx into monocytes also directly modulates their adhesion to endothelial cells and arteries. Reclaims manganese from the bile at the apical membrane of hepatocytes, thereby regulating the activity of the manganese-dependent enzymes through the systemic levels of the nutrient. Also participates in manganese reabsorption in the proximal tubule of the kidney. By mediating the extracellular uptake of manganese by cells of the blood-brain barrier, may also play a role in the transport of the micronutrient to the brain. With manganese cellular uptake also participates in mitochondrial proper function. Finally, also probably functions intracellularly, translocating zinc from lysosome to cytosol to indirectly enhance the expression of specific genes during TCR-mediated T cell activation. This chain is Metal cation symporter ZIP8, found in Mus musculus (Mouse).